Consider the following 82-residue polypeptide: Immediate early response 3-interacting protein 1 (82 aa).

The next 2 helical transmembrane spans lie at 2–22 (AFTLYSLLQAALLCVNAIAVL) and 62–82 (VMRVPLIIVNSIAIVLLLLFG).

The protein belongs to the YOS1 family.

It localises to the endoplasmic reticulum membrane. Regulator of endoplasmic reticulum secretion that acts as a key determinant of brain size. Required for secretion of extracellular matrix proteins. Required for correct brain development by depositing sufficient extracellular matrix proteins for tissue integrity and the proliferation of neural progenitors. Acts as a regulator of the unfolded protein response (UPR). The sequence is that of Immediate early response 3-interacting protein 1 from Bos taurus (Bovine).